A 314-amino-acid polypeptide reads, in one-letter code: GMP synthase [glutamine-hydrolyzing] subunit B (314 aa).

In terms of domain architecture, GMPS ATP-PPase spans 2 to 186 (FDPKKFVEEA…LGIPDEIVER (185 aa)). 29 to 35 (SGGVDST) serves as a coordination point for ATP.

Heterodimer composed of a glutamine amidotransferase subunit (A) and a GMP-binding subunit (B).

The enzyme catalyses XMP + L-glutamine + ATP + H2O = GMP + L-glutamate + AMP + diphosphate + 2 H(+). It functions in the pathway purine metabolism; GMP biosynthesis; GMP from XMP (L-Gln route): step 1/1. Functionally, catalyzes the synthesis of GMP from XMP. This is GMP synthase [glutamine-hydrolyzing] subunit B (guaAB) from Methanopyrus kandleri (strain AV19 / DSM 6324 / JCM 9639 / NBRC 100938).